Consider the following 159-residue polypeptide: Cyclic pyranopterin monophosphate synthase (159 aa).

Residues 75–77 (LCH) and 113–114 (ME) each bind substrate. Asp-128 is an active-site residue.

The protein belongs to the MoaC family. As to quaternary structure, homohexamer; trimer of dimers.

The catalysed reaction is (8S)-3',8-cyclo-7,8-dihydroguanosine 5'-triphosphate = cyclic pyranopterin phosphate + diphosphate. It functions in the pathway cofactor biosynthesis; molybdopterin biosynthesis. In terms of biological role, catalyzes the conversion of (8S)-3',8-cyclo-7,8-dihydroguanosine 5'-triphosphate to cyclic pyranopterin monophosphate (cPMP). In Serratia proteamaculans (strain 568), this protein is Cyclic pyranopterin monophosphate synthase.